The chain runs to 236 residues: MFDSLVDFLKTNIDELNGHELQISNEFKEHHNKDSKYIIKNWLFSSPEYRKWRITRLDGGKNIQVFNTVAYPNFDSELPILGADILWFGTAKKLLAILDYQPLIQENKYLEKYCSSLGMIKKKYSAFDNNKMKNIYDSKKYFSPWVIICRGNKLNLDRDLNDVFHAFINNYLNLNKSNPVNQFLNLEEIKINQIKYDKYSFEKDPADKLFKSFFGEKWTKKFINKFLFTLNNEIIL.

The protein belongs to the HY2 family.

The catalysed reaction is 15,16-dihydrobiliverdin + oxidized 2[4Fe-4S]-[ferredoxin] = biliverdin IXalpha + reduced 2[4Fe-4S]-[ferredoxin] + 2 H(+). Functionally, catalyzes the two-electron reduction of biliverdin IX-alpha at the C15 methine bridge. The sequence is that of 15,16-dihydrobiliverdin:ferredoxin oxidoreductase from Prochlorococcus marinus (strain MIT 9312).